The chain runs to 428 residues: Glutamyl-tRNA reductase (428 aa).

Substrate contacts are provided by residues 55 to 58, Ser-114, 119 to 121, and Gln-125; these read TCNR and ETQ. The Nucleophile role is filled by Cys-56. 194 to 199 serves as a coordination point for NADP(+); that stretch reads GAGEMI.

Belongs to the glutamyl-tRNA reductase family. In terms of assembly, homodimer.

It catalyses the reaction (S)-4-amino-5-oxopentanoate + tRNA(Glu) + NADP(+) = L-glutamyl-tRNA(Glu) + NADPH + H(+). Its pathway is porphyrin-containing compound metabolism; protoporphyrin-IX biosynthesis; 5-aminolevulinate from L-glutamyl-tRNA(Glu): step 1/2. Its function is as follows. Catalyzes the NADPH-dependent reduction of glutamyl-tRNA(Glu) to glutamate 1-semialdehyde (GSA). This Paraburkholderia xenovorans (strain LB400) protein is Glutamyl-tRNA reductase.